Here is a 271-residue protein sequence, read N- to C-terminus: Autophagy protein 5 (271 aa).

Residue Lys-145 forms a Glycyl lysine isopeptide (Lys-Gly) (interchain with G-Cter in ATG12) linkage.

It belongs to the ATG5 family. Conjugated with ATG12. Conjugated to ATG12; which is essential for autophagy.

The protein localises to the preautophagosomal structure membrane. Its function is as follows. Involved in cytoplasm to vacuole transport (Cvt) and autophagic vesicle formation. Autophagy is essential for maintenance of amino acid levels and protein synthesis under nitrogen starvation. Required for selective autophagic degradation of the nucleus (nucleophagy). Also required for mitophagy, which eliminates defective or superfluous mitochondria in order to fulfill cellular energy requirements and prevent excess ROS production. Conjugation with ATG12, through a ubiquitin-like conjugating system involving ATG7 as an E1-like activating enzyme and ATG10 as an E2-like conjugating enzyme, is essential for its function. The ATG12-ATG5 conjugate acts as an E3-like enzyme which is required for lipidation of ATG8 and ATG8 association to the vesicle membranes. The polypeptide is Autophagy protein 5 (ATG5) (Kluyveromyces lactis (strain ATCC 8585 / CBS 2359 / DSM 70799 / NBRC 1267 / NRRL Y-1140 / WM37) (Yeast)).